The primary structure comprises 47 residues: Snake venom metalloproteinase jararafibrase-4 (47 aa).

The Peptidase M12B domain occupies 6–47 (RYIELFLVVDHGMFMKYNGNSDKIYYYIHQMVNIMKXAYXYL). Glu9 is a Ca(2+) binding site.

The protein belongs to the venom metalloproteinase (M12B) family. As to quaternary structure, monomer. It depends on Zn(2+) as a cofactor. Expressed by the venom gland.

It is found in the secreted. Inhibited by 1,10-phenanthroline and EDTA. Its function is as follows. The metalloproteinase is a probable venom zinc protease that induces local hemorrhage in the skin of rats. Degrades type-IV collagen, gelatin, laminin and fibronectin. Has fibrinolytic activities. Has high hemagglutinating activity on red blood cells. Cleaves insulin B chain at 29-His-|-Leu-30, and 38-Ala-|-Leu-39 bonds. The protein is Snake venom metalloproteinase jararafibrase-4 of Bothrops jararaca (Jararaca).